Here is a 303-residue protein sequence, read N- to C-terminus: Recombination-associated protein RdgC (303 aa).

Belongs to the RdgC family.

The protein localises to the cytoplasm. The protein resides in the nucleoid. May be involved in recombination. The polypeptide is Recombination-associated protein RdgC (Shewanella loihica (strain ATCC BAA-1088 / PV-4)).